A 1637-amino-acid chain; its full sequence is Acrosomal protein KIAA1210 (1637 aa).

10 disordered regions span residues 44–121 (RFSS…LSIS), 141–293 (RTTT…KNEW), 341–404 (PTTT…KKKD), 438–759 (VCGE…SQSE), 865–896 (PKLP…EGST), 935–975 (SKYS…FQPL), 1017–1057 (LQPW…IPSQ), 1090–1137 (FPFQ…SRRA), 1182–1238 (SQTI…SKSF), and 1539–1558 (NKGD…PAFS). Residues 103–114 (HRSKSLKIKSQR) are compositionally biased toward basic residues. The span at 141-156 (RTTTTFRRRSSQCSST) shows a compositional bias: low complexity. Over residues 170 to 190 (SESSTQQFSGFSTPATSQGCL) the composition is skewed to polar residues. The span at 229-249 (AKEKTTTKTKEAEQGEQKVDS) shows a compositional bias: basic and acidic residues. A compositionally biased stretch (low complexity) spans 250–261 (TELSSQEQSSKT). Over residues 341 to 353 (PTTTEAEVTTVQK) the composition is skewed to polar residues. A compositionally biased stretch (basic and acidic residues) spans 355 to 374 (PSDKGDVERELADIDVEAQK). Positions 508–526 (TGETSSDSKSTSEYESSSE) are enriched in low complexity. Residues 550–572 (ADDEEDGDDEKEEKDNDDDDEEN) are compositionally biased toward acidic residues. Over residues 689-698 (DLSSSEQEQQ) the composition is skewed to low complexity. Polar residues-rich tracts occupy residues 745 to 759 (SPTQ…SQSE), 879 to 896 (GKQS…EGST), 935 to 956 (SKYS…STSA), 964 to 975 (SQPSVTPKFQPL), and 1017 to 1030 (LQPW…QVSV).

In terms of assembly, interacts with TOP2B. As to expression, predominantly expressed in testis (at protein level).

The protein localises to the cytoplasmic vesicle. The protein resides in the secretory vesicle. Its subcellular location is the acrosome. The polypeptide is Acrosomal protein KIAA1210 (Mus musculus (Mouse)).